Reading from the N-terminus, the 278-residue chain is Tryptophan synthase alpha chain (278 aa).

Active-site proton acceptor residues include glutamate 50 and aspartate 61.

It belongs to the TrpA family. As to quaternary structure, tetramer of two alpha and two beta chains.

It carries out the reaction (1S,2R)-1-C-(indol-3-yl)glycerol 3-phosphate + L-serine = D-glyceraldehyde 3-phosphate + L-tryptophan + H2O. The protein operates within amino-acid biosynthesis; L-tryptophan biosynthesis; L-tryptophan from chorismate: step 5/5. In terms of biological role, the alpha subunit is responsible for the aldol cleavage of indoleglycerol phosphate to indole and glyceraldehyde 3-phosphate. This chain is Tryptophan synthase alpha chain, found in Rhodopseudomonas palustris (strain BisB5).